The chain runs to 441 residues: Ribulose bisphosphate carboxylase large chain (441 aa).

Substrate-binding residues include Asn89 and Thr139. Lys141 (proton acceptor) is an active-site residue. Lys143 provides a ligand contact to substrate. Mg(2+) contacts are provided by Lys167, Asp169, and Glu170. Position 167 is an N6-carboxylysine (Lys167). His260 (proton acceptor) is an active-site residue. The substrate site is built by Arg261, His293, and Ser345.

Belongs to the RuBisCO large chain family. Type I subfamily. In terms of assembly, heterohexadecamer of 8 large chains and 8 small chains; disulfide-linked. The disulfide link is formed within the large subunit homodimers. The cofactor is Mg(2+). In terms of processing, the disulfide bond which can form in the large chain dimeric partners within the hexadecamer appears to be associated with oxidative stress and protein turnover.

It is found in the plastid. It localises to the chloroplast. It catalyses the reaction 2 (2R)-3-phosphoglycerate + 2 H(+) = D-ribulose 1,5-bisphosphate + CO2 + H2O. It carries out the reaction D-ribulose 1,5-bisphosphate + O2 = 2-phosphoglycolate + (2R)-3-phosphoglycerate + 2 H(+). Its function is as follows. RuBisCO catalyzes two reactions: the carboxylation of D-ribulose 1,5-bisphosphate, the primary event in carbon dioxide fixation, as well as the oxidative fragmentation of the pentose substrate in the photorespiration process. Both reactions occur simultaneously and in competition at the same active site. In Viola sororia (Woolly blue violet), this protein is Ribulose bisphosphate carboxylase large chain.